Reading from the N-terminus, the 82-residue chain is Small ribosomal subunit protein uS17 (82 aa).

The protein belongs to the universal ribosomal protein uS17 family. Part of the 30S ribosomal subunit.

Functionally, one of the primary rRNA binding proteins, it binds specifically to the 5'-end of 16S ribosomal RNA. The sequence is that of Small ribosomal subunit protein uS17 from Nitrobacter hamburgensis (strain DSM 10229 / NCIMB 13809 / X14).